The following is a 375-amino-acid chain: MNSLQVLTKKVLIENKAFSEYHEDDIFILQQLGLWWHNGPIGFCKQCKMVTSGSMSCSDVDSYELDRALVRAVKKNQTDLIKLFVLWGANINYGIICAKTERTKVLCIQLGADPKFLDVGLYNMFIDLIKQQKVLLAIDIYYDNISILDSFDSHDFYVLIDFIYNCFILNLDEKEKMIKNTYVLKFWFKIAIEFNLIKPIRFLSKKFPHLDYWRLKTAVYLGNVDEIHHAYFQENIRLDPNDMMSLACMYPQNKLGIYYCFVLGANINTALETLIGFINHEVNREITFFSNYGIWSNVHFCISLGANPYTKKIQETLLRQEKNVIMKLLFKKGLLSPHSILHKKILEPSEVRKIISTYEYTETFHSFSLLRDNLQ.

This sequence belongs to the asfivirus MGF 360 family.

Its function is as follows. Plays a role in virus cell tropism, and may be required for efficient virus replication in macrophages. The sequence is that of Protein MGF 360-5L from African swine fever virus (isolate Portugal/Lis 57/1957) (ASFV).